We begin with the raw amino-acid sequence, 254 residues long: Putative epimerase LsrE (254 aa).

The helical transmembrane segment at 14–34 (VALLASYPLSVGILAGQWIAL) threads the bilayer. A divalent metal cation-binding residues include histidine 50, aspartate 52, and histidine 81. Aspartate 52 functions as the Proton acceptor in the catalytic mechanism. Substrate-binding positions include histidine 81, 166–169 (GYGS), 199–201 (DGS), and 221–222 (GS). Position 199 (aspartate 199) interacts with a divalent metal cation. Aspartate 199 (proton donor) is an active-site residue.

Belongs to the ribulose-phosphate 3-epimerase family. It depends on a divalent metal cation as a cofactor.

Its subcellular location is the cell membrane. The protein is Putative epimerase LsrE (lsrE) of Salmonella choleraesuis (strain SC-B67).